The primary structure comprises 134 residues: Holo-[acyl-carrier-protein] synthase (134 aa).

Mg(2+) is bound by residues D8 and E59.

This sequence belongs to the P-Pant transferase superfamily. AcpS family. Mg(2+) serves as cofactor.

The protein localises to the cytoplasm. It catalyses the reaction apo-[ACP] + CoA = holo-[ACP] + adenosine 3',5'-bisphosphate + H(+). Functionally, transfers the 4'-phosphopantetheine moiety from coenzyme A to a Ser of acyl-carrier-protein. This Zymomonas mobilis subsp. mobilis (strain ATCC 31821 / ZM4 / CP4) protein is Holo-[acyl-carrier-protein] synthase.